A 195-amino-acid chain; its full sequence is dITP/XTP pyrophosphatase (195 aa).

8 to 13 serves as a coordination point for substrate; that stretch reads SNNQGK. Positions 39 and 68 each coordinate Mg(2+). Aspartate 68 acts as the Proton acceptor in catalysis. Residues serine 69, 149 to 152, lysine 172, and 177 to 178 each bind substrate; these read FGYD and HR.

This sequence belongs to the HAM1 NTPase family. In terms of assembly, homodimer. The cofactor is Mg(2+).

The catalysed reaction is XTP + H2O = XMP + diphosphate + H(+). It catalyses the reaction dITP + H2O = dIMP + diphosphate + H(+). It carries out the reaction ITP + H2O = IMP + diphosphate + H(+). Its function is as follows. Pyrophosphatase that catalyzes the hydrolysis of nucleoside triphosphates to their monophosphate derivatives, with a high preference for the non-canonical purine nucleotides XTP (xanthosine triphosphate), dITP (deoxyinosine triphosphate) and ITP. Seems to function as a house-cleaning enzyme that removes non-canonical purine nucleotides from the nucleotide pool, thus preventing their incorporation into DNA/RNA and avoiding chromosomal lesions. In Staphylococcus aureus (strain COL), this protein is dITP/XTP pyrophosphatase.